A 302-amino-acid chain; its full sequence is Glycine--tRNA ligase alpha subunit (302 aa).

This sequence belongs to the class-II aminoacyl-tRNA synthetase family. In terms of assembly, tetramer of two alpha and two beta subunits.

The protein localises to the cytoplasm. It catalyses the reaction tRNA(Gly) + glycine + ATP = glycyl-tRNA(Gly) + AMP + diphosphate. The chain is Glycine--tRNA ligase alpha subunit (glyQ) from Haemophilus influenzae (strain ATCC 51907 / DSM 11121 / KW20 / Rd).